Here is a 504-residue protein sequence, read N- to C-terminus: Sucrose phosphorylase (504 aa).

Residue Asp-50 participates in substrate binding. Residues His-88, Arg-190–Asp-192, Glu-232, His-289–Asp-290, Asp-342–Gln-345, and Arg-399 each bind sucrose. Asp-192 functions as the Nucleophile in the catalytic mechanism. The active-site Proton donor is Glu-232.

It belongs to the glycosyl hydrolase 13 family. Sucrose phosphorylase subfamily. In terms of assembly, homodimer.

It carries out the reaction sucrose + phosphate = D-fructose + alpha-D-glucose 1-phosphate. Catalyzes the reversible phosphorolysis of sucrose into alpha-D-glucose 1-phosphate (Glc1P) and D-fructose. Is involved in sucrose degradation. Also displays transglucosylation activity in vitro, by transferring the glucosyl moiety of Glc1P to a broad range of monomeric sugars, such as D- and L-arabinose, D- and L-arabitol, and xylitol. This chain is Sucrose phosphorylase, found in Bifidobacterium adolescentis (strain ATCC 15703 / DSM 20083 / NCTC 11814 / E194a).